The chain runs to 177 residues: Adenine phosphoribosyltransferase (177 aa).

This sequence belongs to the purine/pyrimidine phosphoribosyltransferase family. Homodimer.

It localises to the cytoplasm. It carries out the reaction AMP + diphosphate = 5-phospho-alpha-D-ribose 1-diphosphate + adenine. The protein operates within purine metabolism; AMP biosynthesis via salvage pathway; AMP from adenine: step 1/1. In terms of biological role, catalyzes a salvage reaction resulting in the formation of AMP, that is energically less costly than de novo synthesis. The protein is Adenine phosphoribosyltransferase of Pelodictyon phaeoclathratiforme (strain DSM 5477 / BU-1).